A 152-amino-acid chain; its full sequence is Ribonuclease pancreatic gamma-type (152 aa).

Residues Met1 to Gly25 form the signal peptide. Residues Lys35 and Arg38 each contribute to the substrate site. Residue His40 is the Proton acceptor of the active site. 4 disulfide bridges follow: Cys54–Cys112, Cys68–Cys123, Cys86–Cys138, and Cys93–Cys100. Residues Lys69 to Thr73, Lys94, and Arg113 each bind substrate. His147 (proton donor) is an active-site residue.

The protein belongs to the pancreatic ribonuclease family. In terms of assembly, monomer.

The protein resides in the secreted. The enzyme catalyses an [RNA] containing cytidine + H2O = an [RNA]-3'-cytidine-3'-phosphate + a 5'-hydroxy-ribonucleotide-3'-[RNA].. The catalysed reaction is an [RNA] containing uridine + H2O = an [RNA]-3'-uridine-3'-phosphate + a 5'-hydroxy-ribonucleotide-3'-[RNA].. Its function is as follows. Endonuclease that catalyzes the cleavage of RNA on the 3' side of pyrimidine nucleotides. Acts on single-stranded and double-stranded RNA. The polypeptide is Ribonuclease pancreatic gamma-type (Rattus norvegicus (Rat)).